The following is a 204-amino-acid chain: Peptidyl-prolyl cis-trans isomerase CYP20-1 (204 aa).

Positions 1–23 are cleaved as a signal peptide; the sequence is MASSVTLLLWSLLLLGTLSAIQA. The 164-residue stretch at 38–201 folds into the PPIase cyclophilin-type domain; that stretch reads YFDVEIDGKA…SKVVIVDSGE (164 aa).

This sequence belongs to the cyclophilin-type PPIase family. As to quaternary structure, interacts with the PP2A A subunit PP2AA1/RCN1. In terms of tissue distribution, ubiquitous, mostly in aerial organs. Higher levels in leaf and buds, and lower levels in seedlings.

The protein localises to the endoplasmic reticulum. It localises to the secreted. The catalysed reaction is [protein]-peptidylproline (omega=180) = [protein]-peptidylproline (omega=0). With respect to regulation, binds cyclosporin A (CsA). CsA mediates some of its effects via an inhibitory action on PPIase. PPIases accelerate the folding of proteins. It catalyzes the cis-trans isomerization of proline imidic peptide bonds in oligopeptides. Seems to be involved in root development. The polypeptide is Peptidyl-prolyl cis-trans isomerase CYP20-1 (CYP20-1) (Arabidopsis thaliana (Mouse-ear cress)).